The chain runs to 105 residues: MIITTTPTVENRQIIEYKGLVFGEVVAGANIIRDFFASITDMIGGRSGVYEDKLNVARQEALVELQKQARNIGANAVIGVSIQYQSMGKKDMFIIVATGTAVVIG.

This sequence belongs to the UPF0145 family.

This is UPF0145 protein HD_1349 from Haemophilus ducreyi (strain 35000HP / ATCC 700724).